A 127-amino-acid chain; its full sequence is Odontogenesis-associated phosphoprotein (127 aa).

Positions 1–23 (MAPGFHFSWLLVSWLVVTTVKGQ) are cleaved as a signal peptide.

Expressed in enamel organs and not expressed in the heart, kidney, or spleen.

Its subcellular location is the secreted. Functionally, may promote nucleation of hydroxyapatite. This chain is Odontogenesis-associated phosphoprotein, found in Rattus norvegicus (Rat).